The chain runs to 489 residues: UDP-N-acetylmuramoyl-L-alanyl-D-glutamate--2,6-diaminopimelate ligase (489 aa).

Ser-30 lines the UDP-N-acetyl-alpha-D-muramoyl-L-alanyl-D-glutamate pocket. Residue 110–116 (GTNGKTT) participates in ATP binding. Residues 152–153 (TT), Ser-179, and Arg-187 each bind UDP-N-acetyl-alpha-D-muramoyl-L-alanyl-D-glutamate. Position 219 is an N6-carboxylysine (Lys-219). Meso-2,6-diaminopimelate is bound by residues Arg-381, 405–408 (DNPR), Gly-458, and Glu-462. Residues 405-408 (DNPR) carry the Meso-diaminopimelate recognition motif motif.

The protein belongs to the MurCDEF family. MurE subfamily. The cofactor is Mg(2+). In terms of processing, carboxylation is probably crucial for Mg(2+) binding and, consequently, for the gamma-phosphate positioning of ATP.

The protein resides in the cytoplasm. It carries out the reaction UDP-N-acetyl-alpha-D-muramoyl-L-alanyl-D-glutamate + meso-2,6-diaminopimelate + ATP = UDP-N-acetyl-alpha-D-muramoyl-L-alanyl-gamma-D-glutamyl-meso-2,6-diaminopimelate + ADP + phosphate + H(+). The protein operates within cell wall biogenesis; peptidoglycan biosynthesis. In terms of biological role, catalyzes the addition of meso-diaminopimelic acid to the nucleotide precursor UDP-N-acetylmuramoyl-L-alanyl-D-glutamate (UMAG) in the biosynthesis of bacterial cell-wall peptidoglycan. The chain is UDP-N-acetylmuramoyl-L-alanyl-D-glutamate--2,6-diaminopimelate ligase from Syntrophomonas wolfei subsp. wolfei (strain DSM 2245B / Goettingen).